Consider the following 111-residue polypeptide: Large ribosomal subunit protein uL22 (111 aa).

The protein belongs to the universal ribosomal protein uL22 family. Part of the 50S ribosomal subunit.

Its function is as follows. This protein binds specifically to 23S rRNA; its binding is stimulated by other ribosomal proteins, e.g. L4, L17, and L20. It is important during the early stages of 50S assembly. It makes multiple contacts with different domains of the 23S rRNA in the assembled 50S subunit and ribosome. The globular domain of the protein is located near the polypeptide exit tunnel on the outside of the subunit, while an extended beta-hairpin is found that lines the wall of the exit tunnel in the center of the 70S ribosome. This chain is Large ribosomal subunit protein uL22, found in Chlamydia trachomatis serovar A (strain ATCC VR-571B / DSM 19440 / HAR-13).